The sequence spans 344 residues: Dihydroorotate dehydrogenase (quinone) (344 aa).

FMN-binding positions include 65–69 (AGLDK) and T89. K69 is a binding site for substrate. Residue 114 to 118 (NRLGF) participates in substrate binding. 2 residues coordinate FMN: N145 and N178. A substrate-binding site is contributed by N178. S181 serves as the catalytic Nucleophile. N183 contacts substrate. Residues K223 and T251 each contribute to the FMN site. 252–253 (NT) provides a ligand contact to substrate. FMN-binding positions include G274, G303, and 324–325 (YT).

Belongs to the dihydroorotate dehydrogenase family. Type 2 subfamily. As to quaternary structure, monomer. Requires FMN as cofactor.

The protein resides in the cell membrane. It carries out the reaction (S)-dihydroorotate + a quinone = orotate + a quinol. It participates in pyrimidine metabolism; UMP biosynthesis via de novo pathway; orotate from (S)-dihydroorotate (quinone route): step 1/1. Catalyzes the conversion of dihydroorotate to orotate with quinone as electron acceptor. This chain is Dihydroorotate dehydrogenase (quinone), found in Methylibium petroleiphilum (strain ATCC BAA-1232 / LMG 22953 / PM1).